Reading from the N-terminus, the 275-residue chain is Ribosomal RNA small subunit methyltransferase A (275 aa).

Residues asparagine 28, leucine 30, glycine 55, glutamate 77, aspartate 103, and asparagine 123 each coordinate S-adenosyl-L-methionine.

It belongs to the class I-like SAM-binding methyltransferase superfamily. rRNA adenine N(6)-methyltransferase family. RsmA subfamily.

The protein localises to the cytoplasm. The enzyme catalyses adenosine(1518)/adenosine(1519) in 16S rRNA + 4 S-adenosyl-L-methionine = N(6)-dimethyladenosine(1518)/N(6)-dimethyladenosine(1519) in 16S rRNA + 4 S-adenosyl-L-homocysteine + 4 H(+). In terms of biological role, specifically dimethylates two adjacent adenosines (A1518 and A1519) in the loop of a conserved hairpin near the 3'-end of 16S rRNA in the 30S particle. May play a critical role in biogenesis of 30S subunits. The chain is Ribosomal RNA small subunit methyltransferase A from Rhizobium etli (strain CIAT 652).